The chain runs to 433 residues: Protein MTH1 (433 aa).

The segment at 1-117 (MFVSPPPATS…SRRSSVAESG (117 aa)) is disordered. The span at 9–47 (TSKNQVLQRRPLESTNSNHGFASSLQAIPENTMSGSDNA) shows a compositional bias: polar residues. The span at 48-64 (SFQSLPLSMSSSQSTTS) shows a compositional bias: low complexity. A compositionally biased stretch (basic and acidic residues) spans 77–87 (YTDRARDEIKK).

To yeast STD1/MSN3.

This Saccharomyces cerevisiae (strain ATCC 204508 / S288c) (Baker's yeast) protein is Protein MTH1 (MTH1).